The chain runs to 411 residues: Na(+)/H(+) antiporter NhaA 2 (411 aa).

Transmembrane regions (helical) follow at residues 18 to 38 (VGGS…NSPV), 59 to 79 (LTVG…VAGL), 97 to 117 (LLPI…AATI), 127 to 147 (GWAI…ALTG), 167 to 187 (LLAI…LWLL), 218 to 238 (WYCM…LGLL), 261 to 281 (PLSA…VALS), 297 to 317 (VIAG…WLAI), 338 to 358 (VLGA…LAGI), and 366 to 386 (IAKV…SALL).

The protein belongs to the NhaA Na(+)/H(+) (TC 2.A.33) antiporter family.

It localises to the cell membrane. It carries out the reaction Na(+)(in) + 2 H(+)(out) = Na(+)(out) + 2 H(+)(in). Na(+)/H(+) antiporter that extrudes sodium in exchange for external protons. This is Na(+)/H(+) antiporter NhaA 2 from Rhodococcus jostii (strain RHA1).